Consider the following 145-residue polypeptide: MIKVLVLHGPNLNLLGVREPNIYGRVDFQTLNNLILQKAKEREIEVEIKQSNFEGQLIDWIQEYRDWADAIIINPGALTHYSYSLRDALLAFGKPVIEVHISNIYKREEFRHHSVIAPVALGQISGFGVNSYLLALEAIFLYFNK.

Y23 (proton acceptor) is an active-site residue. 3 residues coordinate substrate: N74, H80, and D87. The active-site Proton donor is H100. Substrate is bound by residues 101-102 (IS) and R111.

The protein belongs to the type-II 3-dehydroquinase family. In terms of assembly, homododecamer.

The catalysed reaction is 3-dehydroquinate = 3-dehydroshikimate + H2O. It functions in the pathway metabolic intermediate biosynthesis; chorismate biosynthesis; chorismate from D-erythrose 4-phosphate and phosphoenolpyruvate: step 3/7. Its function is as follows. Catalyzes a trans-dehydration via an enolate intermediate. The protein is 3-dehydroquinate dehydratase of Dictyoglomus turgidum (strain DSM 6724 / Z-1310).